Here is a 64-residue protein sequence, read N- to C-terminus: Relaxin (64 aa).

Intrachain disulfides connect Cys-11/Cys-51, Cys-23/Cys-64, and Cys-50/Cys-55.

The protein belongs to the insulin family. As to quaternary structure, heterodimer of a B chain and an A chain linked by two disulfide bonds.

The protein localises to the secreted. This is Relaxin from Leucoraja erinaceus (Little skate).